A 556-amino-acid polypeptide reads, in one-letter code: U-box domain-containing protein 38 (556 aa).

The disordered stretch occupies residues 1–34 (MGKNGRLRWNPFSHRSSSSTSSSSRQQQQEQQPP). Low complexity predominate over residues 13-32 (SHRSSSSTSSSSRQQQQEQQ). Residues 32 to 108 (QPPVEFLCPI…DTWCDTVGVS (77 aa)) form the U-box domain. 5 ARM repeats span residues 256 to 295 (DEAR…NLSL), 297 to 336 (KKNK…SLSL), 338 to 378 (DDNK…HLTL), 380 to 417 (QTNR…NLAC), and 418 to 468 (CSEG…ALSH).

Binds to SD16, SD17, SD18 and SD129.

It catalyses the reaction S-ubiquitinyl-[E2 ubiquitin-conjugating enzyme]-L-cysteine + [acceptor protein]-L-lysine = [E2 ubiquitin-conjugating enzyme]-L-cysteine + N(6)-ubiquitinyl-[acceptor protein]-L-lysine.. It functions in the pathway protein modification; protein ubiquitination. In terms of biological role, functions as an E3 ubiquitin ligase. The polypeptide is U-box domain-containing protein 38 (PUB38) (Arabidopsis thaliana (Mouse-ear cress)).